A 323-amino-acid polypeptide reads, in one-letter code: Dolichyl-phosphate beta-glucosyltransferase ALG5A (323 aa).

At 1–5 the chain is on the lumenal side; the sequence is MKFWR. A helical membrane pass occupies residues 6 to 26; the sequence is FVQILFFLGVAAVGLVVAVMI. Residues 27 to 323 lie on the Cytoplasmic side of the membrane; the sequence is ANADDTTLFD…GAWKIRDRRH (297 aa).

The protein belongs to the glycosyltransferase 2 family.

It localises to the endoplasmic reticulum membrane. It carries out the reaction a di-trans,poly-cis-dolichyl phosphate + UDP-alpha-D-glucose = a di-trans,poly-cis-dolichyl beta-D-glucosyl phosphate + UDP. The protein operates within protein modification; protein glycosylation. Its function is as follows. Dolichyl-phosphate beta-glucosyltransferase involved in the glycosylation of glycoproteins through the synthesis of dolichyl beta-D-glucosyl phosphate which serves as a sugar donor for transfer of three glucose residues to the Man-9-GlcNAc-2-PP-dolichol precursor to N-glycans. This Trichomonas vaginalis (strain ATCC PRA-98 / G3) protein is Dolichyl-phosphate beta-glucosyltransferase ALG5A.